The following is a 100-amino-acid chain: Small ribosomal subunit protein bS18c (100 aa).

Belongs to the bacterial ribosomal protein bS18 family. In terms of assembly, part of the 30S ribosomal subunit.

It localises to the plastid. The protein resides in the chloroplast. The sequence is that of Small ribosomal subunit protein bS18c from Pleurastrum terricola (Filamentous green alga).